Here is a 188-residue protein sequence, read N- to C-terminus: UPF0301 protein PD_1276 (188 aa).

The protein belongs to the UPF0301 (AlgH) family.

The polypeptide is UPF0301 protein PD_1276 (Xylella fastidiosa (strain Temecula1 / ATCC 700964)).